A 369-amino-acid chain; its full sequence is Probable methyltransferase TCM_000331 (369 aa).

The S-adenosyl-L-homocysteine site is built by tyrosine 18, cysteine 60, asparagine 65, aspartate 98, leucine 99, serine 137, and phenylalanine 138. Mg(2+) contacts are provided by asparagine 176, aspartate 261, phenylalanine 263, and asparagine 264.

Belongs to the methyltransferase superfamily. Type-7 methyltransferase family. Mg(2+) serves as cofactor.

This chain is Probable methyltransferase TCM_000331, found in Theobroma cacao (Cacao).